Reading from the N-terminus, the 445-residue chain is Ribosomal protein uS12 methylthiotransferase RimO (445 aa).

The MTTase N-terminal domain maps to 4–119 (YKVGMVSLGC…INEAIMNFIN (116 aa)). The [4Fe-4S] cluster site is built by Cys-13, Cys-48, Cys-82, Cys-157, Cys-161, and Cys-164. Positions 143-373 (TTDKATAYLR…MLLQKEVSEE (231 aa)) constitute a Radical SAM core domain. Positions 376-441 (KNKVGREYDV…EYDLVGVVCN (66 aa)) constitute a TRAM domain.

This sequence belongs to the methylthiotransferase family. RimO subfamily. [4Fe-4S] cluster is required as a cofactor.

Its subcellular location is the cytoplasm. It carries out the reaction L-aspartate(89)-[ribosomal protein uS12]-hydrogen + (sulfur carrier)-SH + AH2 + 2 S-adenosyl-L-methionine = 3-methylsulfanyl-L-aspartate(89)-[ribosomal protein uS12]-hydrogen + (sulfur carrier)-H + 5'-deoxyadenosine + L-methionine + A + S-adenosyl-L-homocysteine + 2 H(+). Its function is as follows. Catalyzes the methylthiolation of an aspartic acid residue of ribosomal protein uS12. The polypeptide is Ribosomal protein uS12 methylthiotransferase RimO (Clostridium perfringens (strain 13 / Type A)).